The chain runs to 150 residues: Transcriptional repressor NrdR (150 aa).

Residues 3-33 (CPFCGGESRVLESRPASDEEAVRRRRECLAC) fold into a zinc finger. The region spanning 48–138 (LIVVKKDGRR…VYREFKDLNE (91 aa)) is the ATP-cone domain.

It belongs to the NrdR family. Requires Zn(2+) as cofactor.

In terms of biological role, negatively regulates transcription of bacterial ribonucleotide reductase nrd genes and operons by binding to NrdR-boxes. The polypeptide is Transcriptional repressor NrdR (Symbiobacterium thermophilum (strain DSM 24528 / JCM 14929 / IAM 14863 / T)).